The primary structure comprises 313 residues: 2-phosphoglycerate kinase (313 aa).

One can recognise an ATP-cone domain in the interval 8–95; that stretch reads SRILVKDKEY…LWRRVLKKHS (88 aa).

The protein belongs to the 2-phosphoglycerate kinase family. A divalent metal cation serves as cofactor.

It catalyses the reaction (2R)-2-phosphoglycerate + ATP = (2R)-2,3-bisphosphoglycerate + ADP + H(+). It functions in the pathway thermoadapter biosynthesis; cyclic 2,3-diphosphoglycerate biosynthesis; cyclic 2,3-diphosphoglycerate from 2-phospho-D-glycerate: step 1/2. In terms of biological role, catalyzes the phosphorylation of 2-phosphoglycerate to 2,3-diphosphoglycerate. Involved in the biosynthesis of cyclic 2,3-bisphosphoglycerate, a thermoprotectant. This chain is 2-phosphoglycerate kinase, found in Methanococcus maripaludis (strain C5 / ATCC BAA-1333).